Here is a 296-residue protein sequence, read N- to C-terminus: DNA-3-methyladenine glycosylase (296 aa).

Serine 110 carries the phosphoserine modification. The Proton acceptor role is filled by aspartate 209.

Belongs to the alkylbase DNA glycosidase AlkA family.

It localises to the nucleus. It carries out the reaction Hydrolysis of alkylated DNA, releasing 3-methyladenine, 3-methylguanine, 7-methylguanine and 7-methyladenine.. Its function is as follows. Hydrolysis of the deoxyribose N-glycosidic bond to excise 3-methyladenine or 7-methyladenine from the damaged DNA polymer formed by alkylation lesions. This Saccharomyces cerevisiae (strain ATCC 204508 / S288c) (Baker's yeast) protein is DNA-3-methyladenine glycosylase (MAG1).